Consider the following 340-residue polypeptide: Fructose import permease protein FruG (340 aa).

The next 9 helical transmembrane spans lie at I23–F43, L49–M69, I73–G93, V101–A121, M130–I150, L182–L202, I234–I254, V273–G293, and F307–V327.

It belongs to the binding-protein-dependent transport system permease family. As to quaternary structure, the complex is composed of an ATP-binding protein (FruK), two transmembrane proteins (FruF and FruG) and a solute-binding protein (FruE).

The protein localises to the cell membrane. Its function is as follows. Part of the high-affinity ABC transporter complex FruEKFG involved in fructose uptake. Can also transport ribose and xylose, with lower affinity. Probably responsible for the translocation of the substrate across the membrane. In Bifidobacterium longum (strain NCC 2705), this protein is Fructose import permease protein FruG.